A 26-amino-acid polypeptide reads, in one-letter code: SSLTIQFVEGQFVDSYDPTIENTFTK.

GTP contacts are provided by serine 1, serine 2, valine 13, tyrosine 16, and threonine 19. Serine 1 contributes to the Mg(2+) binding site. Positions 16–24 match the Effector region motif; that stretch reads YDPTIENTF. Mg(2+) is bound at residue threonine 19.

The protein belongs to the small GTPase superfamily. Rheb family.

It catalyses the reaction GTP + H2O = GDP + phosphate + H(+). In terms of biological role, binds GTP and exhibits intrinsic GTPase activity. The chain is GTP-binding protein Rheb from Crocodylus siamensis (Siamese crocodile).